A 507-amino-acid polypeptide reads, in one-letter code: ATP synthase subunit alpha, plastid (507 aa).

170-177 contributes to the ATP binding site; that stretch reads GDRQTGKT.

It belongs to the ATPase alpha/beta chains family. F-type ATPases have 2 components, CF(1) - the catalytic core - and CF(0) - the membrane proton channel. CF(1) has five subunits: alpha(3), beta(3), gamma(1), delta(1), epsilon(1). CF(0) has four main subunits: a, b, b' and c.

The protein localises to the plastid membrane. It catalyses the reaction ATP + H2O + 4 H(+)(in) = ADP + phosphate + 5 H(+)(out). In terms of biological role, produces ATP from ADP in the presence of a proton gradient across the membrane. The alpha chain is a regulatory subunit. This is ATP synthase subunit alpha, plastid from Cuscuta obtusiflora (Peruvian dodder).